Here is a 420-residue protein sequence, read N- to C-terminus: D-tagatose-1,6-bisphosphate aldolase subunit GatZ (420 aa).

It belongs to the GatZ/KbaZ family. GatZ subfamily. Forms a complex with GatY.

Its pathway is carbohydrate metabolism; D-tagatose 6-phosphate degradation; D-glyceraldehyde 3-phosphate and glycerone phosphate from D-tagatose 6-phosphate: step 2/2. Its function is as follows. Component of the tagatose-1,6-bisphosphate aldolase GatYZ that is required for full activity and stability of the Y subunit. Could have a chaperone-like function for the proper and stable folding of GatY. When expressed alone, GatZ does not show any aldolase activity. Is involved in the catabolism of galactitol. This is D-tagatose-1,6-bisphosphate aldolase subunit GatZ from Shigella boydii serotype 18 (strain CDC 3083-94 / BS512).